Reading from the N-terminus, the 420-residue chain is Zinc finger protein Pegasus (420 aa).

Residue K5 forms a Glycyl lysine isopeptide (Lys-Gly) (interchain with G-Cter in SUMO2) linkage. 3 C2H2-type zinc fingers span residues 82 to 104 (LKCR…IRIH), 110 to 132 (HRCH…MRSH), and 138 to 161 (YKCE…RRKH). K185 participates in a covalent cross-link: Glycyl lysine isopeptide (Lys-Gly) (interchain with G-Cter in SUMO2). 2 stretches are compositionally biased toward polar residues: residues 223–236 (QTDS…TTPT) and 262–273 (LSSLPPENQNPA). 2 disordered regions span residues 223–247 (QTDS…QELM) and 262–356 (LSSL…PALP). The span at 290 to 311 (QPSTQAVVSAVSASIPQSSSPT) shows a compositional bias: low complexity. Residues 332-349 (SEPSAHTSTPSIGNSQPS) are compositionally biased toward polar residues. The C2H2-type 4; degenerate zinc finger occupies 364–387 (HHCQHCDMYFFADNILYTIHMGCH). The segment at 393–417 (FQCNICGCKCKNKYDFACHFARGQH) adopts a C2H2-type 5 zinc-finger fold.

It belongs to the Ikaros C2H2-type zinc-finger protein family. In terms of assembly, self-associates. Interacts with other family members; IKZF1, IKZF2, IKZF3 and IKZF4.

It localises to the nucleus. Transcriptional repressor that binds the core 5'GNNTGTNG-3' DNA consensus sequence. Involved in megakaryocyte differentiation. In Pongo abelii (Sumatran orangutan), this protein is Zinc finger protein Pegasus (IKZF5).